The sequence spans 220 residues: MQINKYIDHTILKADAPKSKVQQIIDEAKKYDFMSVCINPTWVSYASQELKDSDVKVCTVIGFPLGANTSELKAFEAKNAIENGADEIDMVINIGAAKSKDWNLVESDIAAVNAVKGDKLLKVIIETSLLTDDEKIKACQIAKAVGADFVKTSTGFSTGGATVHDVKLMRQTVGPDMGVKASGGVHNLEEAKAMIDAGATRLGVSAGVAIMEGLTSNDNY.

Asp89 acts as the Proton donor/acceptor in catalysis. The Schiff-base intermediate with acetaldehyde role is filled by Lys151. Lys180 functions as the Proton donor/acceptor in the catalytic mechanism.

It belongs to the DeoC/FbaB aldolase family. DeoC type 1 subfamily.

It is found in the cytoplasm. The enzyme catalyses 2-deoxy-D-ribose 5-phosphate = D-glyceraldehyde 3-phosphate + acetaldehyde. Its pathway is carbohydrate degradation; 2-deoxy-D-ribose 1-phosphate degradation; D-glyceraldehyde 3-phosphate and acetaldehyde from 2-deoxy-alpha-D-ribose 1-phosphate: step 2/2. In terms of biological role, catalyzes a reversible aldol reaction between acetaldehyde and D-glyceraldehyde 3-phosphate to generate 2-deoxy-D-ribose 5-phosphate. The polypeptide is Deoxyribose-phosphate aldolase (Lactococcus lactis subsp. lactis (strain IL1403) (Streptococcus lactis)).